Reading from the N-terminus, the 97-residue chain is Defensin-like protein 301 (97 aa).

Positions 1–24 (MEKVTSIFFVLLLISSCLILRSQG) are cleaved as a signal peptide. 6 cysteine pairs are disulfide-bonded: C28–C47, C34–C53, C39–C55, C65–C84, C71–C92, and C76–C94.

The protein belongs to the DEFL family.

It localises to the secreted. This chain is Defensin-like protein 301, found in Arabidopsis thaliana (Mouse-ear cress).